The following is a 1179-amino-acid chain: MARIPRCDFLRPPGIYYLITSLLAGLFLPPAIAFNLDVMGAIRKEGEPGSLFGFSVALHRQLQPRPQSWLLVGAPQALALPGQQANRTGGLFACPLSLEETDCYRVDIDRGANVQKESKENQWLGVSVRSQGAGGKIVTCAHRYESRQRVDQALETRDVIGRCFVLSQDLAIRDELDGGEWKFCEGRPQGHEQFGFCQQGTAATFSPDSHYLVFGAPGTYNWKGTARVELCAQGSPDLAHLDDGPYEAGGEKEQDPRLIPVPANSYLGLLFVTNIDSSDPDQLVYKTLDPADRLTGPAGDLTLNSYLGFSIDSGKGLMRSEELSFVAGAPRANHKGAVVILRKDSATRLIPEVVLSGERLTSGFGYSLAVTDLNNDGWADLIVGAPYFFERQEELGGAVYVYMNQGGHWADISPLRICGSPDSMFGISLAVLGDLNQDGFPDIAVGAPFDGDGKVFIYHGSSLGVVVKPSQVLEGEAVGIKSFGYSLSGGLDVDGNHYPDLLVGSLADTAALFRARPVLHVSQEIFIDPRAIDLEQPNCADGRLVCVDIKICFSYVAVPSSYSPSVALDYMLDGDTDRRLRGQVPRVTFLSRGLDDLRHQSSGTVWLKHQHDRVCGDTVFQLQENVKDKLRAIVVTLSYGLRTPPLGRQAPGQELPTVAPILNAHQPSTQRTEIHFLKQGCGQDKICQSNLQLERYQFCSRISDTEFQALPMDLDGRTALFALSGQPFIGLELTVTNLPSDPSRPQADGDDAHEAQLLVTLPASLRYSGVRALDSVEKPLCLSNDSASHVECELGNPMKRGAQVTFYLILSTSGITIETTELEVKLLLATISEQELDPVSVRAHVFIELPLSISGVATPQQLFFSGEVKGESAMRSERELGRKVKYEVTVSNQGQSLNTLGSANLNIMWPHEIANGKWLLYPMRVELEGGQGPGKRGICSPRPNILQLDVDSRDRRRRELGQPEPQEPPEKVEPSTSWWPVSSAEKRNMTLDCPRTAKCVVFSCPLYSFDRAAVLHVWGRLWNSTFLEEYMAVKSLEVIVRANITVKSSIKNLLLRDASTVIPVMVYLDPMAVVVEGVPWWVILLGVLAGLLVLALLVLLLWKLGFFKRAKHPEATVPQYHAVKIPREDRQQFKEEKTGTIQRSNWGNSQWEGSDAHPILAADWHPELGPDGHPVPATA.

An N-terminal signal peptide occupies residues 1–33 (MARIPRCDFLRPPGIYYLITSLLAGLFLPPAIA). At 34–1076 (FNLDVMGAIR…YLDPMAVVVE (1043 aa)) the chain is on the extracellular side. FG-GAP repeat units follow at residues 38–103 (VMGA…ETDC), 110–175 (RGAN…IRDE), 185–238 (EGRP…SPDL), 292–349 (DRLT…ATRL), 350–411 (IPEV…HWAD), 412–467 (ISPL…GVVV), and 471–530 (QVLE…IDPR). Asn-86 carries an N-linked (GlcNAc...) asparagine glycan. Disulfide bonds link Cys-94-Cys-103, Cys-140-Cys-163, and Cys-184-Cys-197. The Ca(2+) site is built by Asp-372, Asn-374, Asp-376, Asp-380, Asp-434, Asn-436, Asp-438, Asp-442, Asp-492, Asp-494, Asn-496, Tyr-498, and Asp-500. Disulfide bonds link Cys-539-Cys-546, Cys-552-Cys-615, Cys-681-Cys-687, Cys-781-Cys-792, Cys-939-Cys-993, and Cys-999-Cys-1004. An N-linked (GlcNAc...) asparagine glycan is attached at Asn-784. Basic and acidic residues predominate over residues 952-961 (SRDRRRRELG). Positions 952-978 (SRDRRRRELGQPEPQEPPEKVEPSTSW) are disordered. Asn-988 carries N-linked (GlcNAc...) asparagine glycosylation. N-linked (GlcNAc...) asparagine glycosylation is found at Asn-1023 and Asn-1043. Residues 1077 to 1102 (GVPWWVILLGVLAGLLVLALLVLLLW) traverse the membrane as a helical segment. Residues 1103–1179 (KLGFFKRAKH…PDGHPVPATA (77 aa)) lie on the Cytoplasmic side of the membrane. Positions 1105–1109 (GFFKR) match the GFFKR motif motif. A disordered region spans residues 1134-1153 (KEEKTGTIQRSNWGNSQWEG). A compositionally biased stretch (polar residues) spans 1139–1152 (GTIQRSNWGNSQWE). A run of 3 repeats spans residues 1155–1158 (DAHP), 1163–1166 (DWHP), and 1171–1174 (DGHP). The interval 1155-1174 (DAHPILAADWHPELGPDGHP) is 3 X 4 AA repeats of D-X-H-P.

Belongs to the integrin alpha chain family. In terms of assembly, heterodimer of an alpha and a beta subunit. The alpha subunit is composed of a heavy and a light chain linked by a disulfide bond. Alpha-7 associates with beta-1. Interacts with COMP. Interacts (via C-terminus intracellular tail region) with CIB1; the interaction is stabilized/increased in a calcium- and magnesium-dependent manner. ADP-ribosylated on at least two sites of the extracellular domain in skeletal myotubes (in vitro). Post-translationally, no proteolytic cleavage to produce the 70 kDa form is seen due to the presence of a Gly instead of an arginine residue at position 647. As to expression, isoforms containing segment X2 are found in adult heart, lung and skeletal muscle. Isoforms containing segment X1 are expressed in adult heart, lung and in proliferating skeletal myoblasts but not in adult skeletal muscle. Isoforms containing segment a are exclusively found in skeletal muscle. Isoforms containing segment B are widely expressed. In muscle fibers isoforms containing segment A and B are expressed at myotendinous and neuromuscular junctions; isoforms containing segment C are expressed at neuromuscular junctions and at extrasynaptic sites.

The protein resides in the membrane. Integrin alpha-7/beta-1 is the primary laminin receptor on skeletal myoblasts and adult myofibers. During myogenic differentiation, it may induce changes in the shape and mobility of myoblasts, and facilitate their localization at laminin-rich sites of secondary fiber formation. Involved in the maintenance of the myofibers cytoarchitecture as well as for their anchorage, viability and functional integrity. Mice carrying a ITGA7 null allele are viable and fertile, but show progressive muscular dystrophy starting soon after birth, but with a distinct variability in different muscle types. Required to promote contractile phenotype acquisition in differentiated airway smooth muscle (ASM) cells. Acts as a Schwann cell receptor for laminin-2. Acts as a receptor of COMP and mediates its effect on vascular smooth muscle cells (VSMCs) maturation. In Mus musculus (Mouse), this protein is Integrin alpha-7 (Itga7).